The following is a 388-amino-acid chain: Splicing factor 3B subunit 4 (388 aa).

RRM domains are found at residues 13-91 (ATIY…KASA) and 100-179 (ANIF…YAFK). The tract at residues 244–388 (QPPPLMGMAQ…GMIPPPPPPS (145 aa)) is disordered. Pro residues-rich tracts occupy residues 261–325 (PPVP…PSRF), 333–355 (MPPP…PPRY), and 362–388 (MYPP…PPPS).

The protein belongs to the SF3B4 family.

It localises to the nucleus. Its function is as follows. Subunit of the splicing factor SF3B required for 'A' complex assembly formed by the stable binding of U2 snRNP to the branchpoint sequence (BPS) in pre-mRNA. Sequence independent binding of SF3A/SF3B complex upstream of the branch site is essential, it may anchor U2 snRNP to the pre-mRNA. May also be involved in the assembly of the 'E' complex. SF3B4 has been found in complex 'B' and 'C' as well. Belongs also to the minor U12-dependent spliceosome, which is involved in the splicing of rare class of nuclear pre-mRNA intron. The protein is Splicing factor 3B subunit 4 (sap-49) of Caenorhabditis elegans.